The chain runs to 3584 residues: MSIPIPEKLQDLTAVKSPSAFGNSIESINGDKNKSERHTASSSAVSTSEIGHPCLLTNFKLAVACSGPAITKVATVNDKDSGSKLKNVINGKDISASEVFKGAWSVVLGTYLAKSHVSLDYGVMKPKGLGPETSCNARVPSENSEMSTSSFLLRANDTLLDIIRQNSMCAHTELRQKSSLDDVESPKRCNTCVIYWPEISCSEQLQIDAWMTILEENDQLTQYDCMIHFASDMRCMLSYRDQFMSENQARHLAATMRVVLSSIASAPQQSLADVDVCSSLDYQTLSRWNLKAPIVSEVCVHDLIEKSCCSRPNSQAVVSWDGCLTYNEMDRLSSHLAQRLRDAGVEPGVFVALCLDRCKWAVIGIVAVMKAGGAFCALDPSYPVSRLKEMCRDLGITIVLTVKSNIQHASPLASKVFALDDDVYFESALSSAHESASWVSVSPHDPVYAVFTSGSTGKPKGIIMEHASFSACALSSVKPLQIADQDRVLHFASYAFDASVIEILAPLIAGATVAIPSERARLEDLPRAMTDLKATWAFLTPTVARLYRPEQMPTLKTLCLGGEAVNASDTRSWSSKNLISGYNPAECCPLGISGPLNDRMPRSLGSTFASQTAWIVDPKDHEKLLPAGAIGELAIEGPVVARGYIHDVTCSDPSTPFVVKLPPWLRRFRATANRGNRIYLTGDLARLDCDDGSVHYLGRKDDQVKIHGQRVELAEIEHHLEQHFVSLATKAVVMLLRPISGRTVLAALIMPHQRLQHGNKSLESLLMEPGDVSQDFRANLASAASKLRLALPSHMVPSVYLPIRHFSTTKSGKIDRGHLQSLLLSLSPENLYGCEETTHRGEEPKSDREKLLQALFAQSLDLPCTRIDLDSNFFQLGGDSLSAMRLLALALEEGISSIAYQDIFSHPTLREIVIVSTSATSREPLYSETVETPPFSLIKDPEMLIQIASEQCGSGVGKADIEDIYPCTHLQQSLMASTAHNPNAYVAILAFKLKSGVDRTRLERAWHIACSGHAILRTRLVQTDTGDCYQVVVKKPPHWTETNEVSDDGSTNSLLRTSFGLGRPLIQLHLTTDQLFVAMHHALYDGWSLPMLIGELDLAYRELSVRRLPCLKNYVKYAMDSADAAASFWQAELQDADPVHFPAPSSLDYKPQPCAAMTISVPLVNSPRRNVTLATEIQFAWAMTVYTYTGCKDVIFGLISSGRAAPVAQIESILGPTFACTPLRVSIDPQGKLGEALDDLQYTIVEQSMFVHFGAQAIRQLGPNAAAACNFQTVLAVEADGPETGEEEGSWFTRYDFLSDVASFSSYALTLRCKLSTRGVEINAVYDKLMVDERQMGRILAQFEHILTQIHSNETVHDDIGGLDKLSVSDWRQLQAWNSNLPPAHPKGLGAHQAIQAKCQAQPDATAIDAWDGCVTYGELERRAEKLAGLVRSHVSKPDQVVVLYFSKSWLTVVAQLAVLKAGAAFITLEISQPVHYLQRVISALGPVLVLTSEDLFSAAEDLQDNAVPVMAVDKDDLSDATARTSQASSSACTVECDLMYIIATSGTTGMPKIVMTDHQAFMTNASPLMNGLGITSDSRVFQFCGYSFDLLIVEHFLTLLAGGCICIPSLHNRNNRFAASIVELEANWVGSPSSVLQLLDPQTVPTVKTIMQAGERLQQGLVDRWASHVRLINAYGPAECSVGALARDTVRPDTDDVQNLGFATGSVCWIVNAETSEKLLPVPIGAEGELIIEGHTLSRGYLGDADKTNASFLRLPNWLRDFRADRGQSQGHRVYLTGDIVRQNSDGSMSFVRRKDAQVKIRGQRVELTDVEHQVERCFIGAHQVVTDIVQIPNSQSSILVALVLTKDAMTNHKQQESLLDQKSAGGLSILAPTSSFTANANAAETALQDRMPAYMVPDLFVPVSDLPREASGKIGRKAIKQYLASLTQQDWSRYSSTRKVPPSNATEHEISAIWARVLQIEPHTFGVHDSFFRLGGDSISGMQVAAACGAAGISVTVKDMFEYRTIRKLALARGETQQLTVGTTSTVSNASGIRQKKALHPFYPEGRLEVYMERMQSRLGQAIERIYPCSPIQQGILMSHARNPHHYDEVIQWKVAGDVSCDISRMQRAWREVVSRHGILRTLFLQVSEDSFLDQVVLKNYSPDISVCTNEEDVEPYRPFEDSVPMHHLLVFQRSADDVTVYLRIHHALVDGLSLHIIRRDLELAYQGRLDELAQPPGYHEYISYLQEKRSRKSLQEYWSSYLQGATGSLFPAVQDEPASDGQYFGAVEIELGSIAKLTQFCEEHKLGVTVVLHVVWAIIVQRYAATDEVCFGYMTSGRHVPVTNVENVVGPLFNMLIGRVKLAYHLSVLSTMYAYQENFINSLDHQHQSLVETLHSIGSSAGDLFNTLITVVNDQPEDHVSQSALRLVGDSVQSRSEYPITLNILNHADKIKMQLSYHTSLLSGVSANTIAKAFRFVLQRTLEQPHELLRALPVLDEDQMNNEFQKNRSVPPQVEELIHDTIHQQCIRCPDSPSVCAWDGNFTYRQLDDLSSALSEEIVRKGAGPEVTIPIVLEKTRWTPVAMLAVLKSGSSFVLMDSTHPAARLGAIIQDVGHPVIIVSAQTRSKVATFSTDVVEVGDWLAREILVAKQQITRQNGLLQATNAAYLVFTSGSTGKPKGAIVEHASLSTAAKYMASRLHIDSASRVLQFSSHAWDIPVTEVLVTLRMGGCVCVPSEEERTGNLAKASERMKVNWALWTPTVARLFKPEEFPHLETLVFAGEALSAADLETWCDRVRLIQGYGPAECSLISTVTDPLTRSDNPRCIGLPSGCVAWVVNRDTHELLAPPGAIGELVLEGPIVGRGYLGDPERAASAFISPPAWLMKLRGSGSSIRLYKTGDLVRQHVSSGLLTFVGRNDDQVKVRGQRVEPGEVEGQVAQVFPGSQVIVLVVKRSAGAVLAALVLQNGEDRSSAGETANLFPPPSLAFAALAKAAFSKLRETMPTYMIPSIILPLSYLPKAATGKADRNLLRDRVASLSDEEIEAYVAASVSHRPASTAMEAELQQLVGQVLQRPLHSISLDEDLFRLGMDSLTAMTIASAARRRGWEVSVPIIFQHSRLSDLARIVEQGQHGTSSRSQLEEARAILNKRLVSLLPEICTKWDLREDQITHIAPTTYYQHMALASDHEAFFGLYFSKPMASEALKAAASRVVKLHSILRTAFVPLEDTYVQLTLCDFDLPSQEIQTNQAEVSAAMELFCRDAADKTAGFGVPVTKLILMLDRQGDCLSLLLRLQRAQFDGVSVMRIMADWRSALEHASCSWEPAPSLDYADFALGRVAQNTPDVFGMWRDVLQGSSMTYLIPQEKYISMTDRAHAERLVTSSCDIPLPEPAPGYTMATVAKAAWAICLARETESEDLLFLQLVRNRHLALDGIDKMVGCSLNYVPVRVPLRRDWKISDLLHWLHQQHIRTMAGDTADWPDVVAKSTTWSSDTEFGSVIHYLSAPAAPVYHFPGDTVAQFQLYDEKMTHTCPLVTCVEFPGPAEDSGRQMKILVTSAVGGQDMVDRLLAVFRSLLCEANAQLDQPLSNILQGLRDGDDATGKAR.

Residues 25-44 (IESINGDKNKSERHTASSSA) form a disordered region. Over residues 29–39 (NGDKNKSERHT) the composition is skewed to basic and acidic residues. Residues 307-706 (SCCSRPNSQA…LGRKDDQVKI (400 aa)) form an adenylation (A) domain 1 region. The 70-residue stretch at 848-917 (REKLLQALFA…TLREIVIVST (70 aa)) folds into the Carrier 1 domain. Ser-880 is modified (O-(pantetheine 4'-phosphoryl)serine). Residues 962 to 1353 (EDIYPCTHLQ…EHILTQIHSN (392 aa)) are condensation (C) domain 1. Positions 1396–1803 (QAKCQAQPDA…RRKDAQVKIR (408 aa)) are adenylation (A) domain 2. The region spanning 1948 to 2016 (TEHEISAIWA…TIRKLALARG (69 aa)) is the Carrier 2 domain. O-(pantetheine 4'-phosphoryl)serine is present on Ser-1980. Residues 2066–2483 (ERIYPCSPIQ…ALPVLDEDQM (418 aa)) form a condensation (C) domain 2 region. An adenylation (A) domain 3 region spans residues 2508-2906 (QCIRCPDSPS…GRNDDQVKVR (399 aa)). Residues 3041–3109 (MEAELQQLVG…RLSDLARIVE (69 aa)) enclose the Carrier 3 domain. Ser-3073 carries the O-(pantetheine 4'-phosphoryl)serine modification. Positions 3174–3472 (LYFSKPMASE…VAKSTTWSSD (299 aa)) are cyclization (Cyc) domain.

Belongs to the NRP synthetase family.

It participates in alkaloid biosynthesis; ergot alkaloid biosynthesis. Functionally, D-lysergyl-peptide-synthetase subunit 1; part of the gene cluster that mediates the biosynthesis of fungal ergot alkaloid. DmaW catalyzes the first step of ergot alkaloid biosynthesis by condensing dimethylallyl diphosphate (DMAP) and tryptophan to form 4-dimethylallyl-L-tryptophan. The second step is catalyzed by the methyltransferase easF that methylates 4-dimethylallyl-L-tryptophan in the presence of S-adenosyl-L-methionine, resulting in the formation of 4-dimethylallyl-L-abrine. The catalase easC and the FAD-dependent oxidoreductase easE then transform 4-dimethylallyl-L-abrine to chanoclavine-I which is further oxidized by easD in the presence of NAD(+), resulting in the formation of chanoclavine-I aldehyde. Agroclavine dehydrogenase easG then mediates the conversion of chanoclavine-I aldehyde to agroclavine via a non-enzymatic adduct reaction: the substrate is an iminium intermediate that is formed spontaneously from chanoclavine-I aldehyde in the presence of glutathione. The presence of easA is not required to complete this reaction. Further conversion of agroclavine to paspalic acid is a two-step process involving oxidation of agroclavine to elymoclavine and of elymoclavine to paspalic acid, the second step being performed by the elymoclavine oxidase cloA. Paspalic acid is then further converted to D-lysergic acid. Ergopeptines are assembled from D-lysergic acid and three different amino acids by the D-lysergyl-peptide-synthetases composed each of a monomudular and a trimodular nonribosomal peptide synthetase subunit. LpsB and lpsC encode the monomodular subunits responsible for D-lysergic acid activation and incorporation into the ergopeptine backbone. LpsA1 and A2 subunits encode the trimodular nonribosomal peptide synthetase assembling the tripeptide portion of ergopeptines. LpsA1 is responsible for formation of the major ergopeptine, ergotamine, and lpsA2 for alpha-ergocryptine, the minor ergopeptine of the total alkaloid mixture elaborated by C.purpurea. D-lysergyl-tripeptides are assembled by the nonribosomal peptide synthetases and released as N-(D-lysergyl-aminoacyl)-lactams. Cyclolization of the D-lysergyl-tripeptides is performed by the Fe(2+)/2-ketoglutarate-dependent dioxygenase easH which introduces a hydroxyl group into N-(D-lysergyl-aminoacyl)-lactam at alpha-C of the aminoacyl residue followed by spontaneous condensation with the terminal lactam carbonyl group. This chain is D-lysergyl-peptide-synthetase subunit 1, found in Claviceps purpurea (strain 20.1) (Ergot fungus).